Here is a 373-residue protein sequence, read N- to C-terminus: tRNA-specific 2-thiouridylase MnmA (373 aa).

Residues 12–19 (GMSGGVDS) and Met-38 contribute to the ATP site. Residues 98 to 100 (NPD) form an interaction with target base in tRNA region. The active-site Nucleophile is Cys-103. A disulfide bridge links Cys-103 with Cys-200. An ATP-binding site is contributed by Gly-127. The interval 150 to 152 (KDQ) is interaction with tRNA. Cys-200 acts as the Cysteine persulfide intermediate in catalysis. The segment at 312 to 313 (RY) is interaction with tRNA.

It belongs to the MnmA/TRMU family.

It is found in the cytoplasm. The catalysed reaction is S-sulfanyl-L-cysteinyl-[protein] + uridine(34) in tRNA + AH2 + ATP = 2-thiouridine(34) in tRNA + L-cysteinyl-[protein] + A + AMP + diphosphate + H(+). Functionally, catalyzes the 2-thiolation of uridine at the wobble position (U34) of tRNA, leading to the formation of s(2)U34. In Streptococcus thermophilus (strain CNRZ 1066), this protein is tRNA-specific 2-thiouridylase MnmA.